A 78-amino-acid chain; its full sequence is Beta-defensin 12 (78 aa).

The first 27 residues, Met1–Ala27, serve as a signal peptide directing secretion. 3 disulfide bridges follow: Cys46-Cys73, Cys53-Cys67, and Cys57-Cys74.

The protein belongs to the beta-defensin family. As to expression, only expressed in epididymis (caput, corpus and cauda).

It localises to the secreted. In terms of biological role, has antibacterial activity. The polypeptide is Beta-defensin 12 (Defb12) (Mus musculus (Mouse)).